The sequence spans 402 residues: Non-homologous end joining protein Ku (402 aa).

The Ku domain occupies 12-185 (ISFGLVTIPV…VAALTGIAQP (174 aa)). The segment at 261–402 (QRAAGGATGG…GPDETAPGGP (142 aa)) is disordered. 2 stretches are compositionally biased toward low complexity: residues 299-308 (GDPAASVPGV) and 332-343 (VPGVPATAVPGT). The span at 344–358 (PGAPVPTAPGVPSAP) shows a compositional bias: pro residues. Low complexity predominate over residues 359 to 376 (APGTSPTSVPGVQTAPNG).

It belongs to the prokaryotic Ku family. Homodimer. Interacts with LigD.

Functionally, with LigD forms a non-homologous end joining (NHEJ) DNA repair enzyme, which repairs dsDNA breaks with reduced fidelity. Binds linear dsDNA with 5'- and 3'- overhangs but not closed circular dsDNA nor ssDNA. Recruits and stimulates the ligase activity of LigD. The sequence is that of Non-homologous end joining protein Ku from Symbiobacterium thermophilum (strain DSM 24528 / JCM 14929 / IAM 14863 / T).